A 121-amino-acid polypeptide reads, in one-letter code: Large ribosomal subunit protein bL20 (121 aa).

This sequence belongs to the bacterial ribosomal protein bL20 family.

Its function is as follows. Binds directly to 23S ribosomal RNA and is necessary for the in vitro assembly process of the 50S ribosomal subunit. It is not involved in the protein synthesizing functions of that subunit. In Chlamydia pneumoniae (Chlamydophila pneumoniae), this protein is Large ribosomal subunit protein bL20 (rplT).